Consider the following 505-residue polypeptide: uncharacterized protein (505 aa).

Helical transmembrane passes span 9 to 29, 49 to 69, 86 to 106, 122 to 142, 156 to 176, 181 to 201, 235 to 255, 261 to 281, 310 to 330, 341 to 361, 371 to 391, 395 to 415, 435 to 455, and 464 to 484; these read ANLT…PFIV, YFSV…SVAA, AASV…AFFI, LSIL…GFGA, IQAV…ACFA, QIQL…FYFF, IGVL…LGAS, AAII…ASLF, LLLA…LTIW, LLFI…LFYI, PAIV…TLSG, LGLY…NAIF, IIGP…IQFI, and LIAT…MLVC.

The protein resides in the cell membrane. May be involved in the production of the exopolysaccharide (EPS) component of the extracellular matrix during biofilm formation. EPS is responsible for the adhesion of chains of cells into bundles. This is an uncharacterized protein from Bacillus subtilis (strain 168).